Reading from the N-terminus, the 197-residue chain is Peptide deformylase (197 aa).

Fe cation-binding residues include cysteine 106 and histidine 148. The active site involves glutamate 149. Histidine 152 is a binding site for Fe cation.

It belongs to the polypeptide deformylase family. Fe(2+) serves as cofactor.

The catalysed reaction is N-terminal N-formyl-L-methionyl-[peptide] + H2O = N-terminal L-methionyl-[peptide] + formate. Its function is as follows. Removes the formyl group from the N-terminal Met of newly synthesized proteins. Requires at least a dipeptide for an efficient rate of reaction. N-terminal L-methionine is a prerequisite for activity but the enzyme has broad specificity at other positions. The polypeptide is Peptide deformylase (Mycolicibacterium vanbaalenii (strain DSM 7251 / JCM 13017 / BCRC 16820 / KCTC 9966 / NRRL B-24157 / PYR-1) (Mycobacterium vanbaalenii)).